A 421-amino-acid chain; its full sequence is Lipid II:glycine glycyltransferase (421 aa).

The protein belongs to the FemABX family. In terms of assembly, monomer.

Its subcellular location is the cytoplasm. The enzyme catalyses beta-D-GlcNAc-(1-&gt;4)-Mur2Ac(oyl-L-Ala-D-isoglutaminyl-L-Lys-D-Ala-D-Ala)-di-trans,octa-cis-undecaprenyl diphosphate + glycyl-tRNA(Gly) = beta-D-GlcNAc-(1-&gt;4)-Mur2Ac(oyl-L-Ala-D-isoglutaminyl-L-Lys-(N(6)-Gly)-D-Ala-D-Ala)-di-trans,octa-cis-undecaprenyl diphosphate + tRNA(Gly) + H(+). Functionally, catalyzes the incorporation of the first glycine of the pentaglycine interpeptide bridge, which is characteristic of the S.aureus peptidoglycan. This glycine is added to the epsilon-amino group of the L-lysine of the membrane-bound lipid II intermediate (GlcNAc-(beta-1,4)-N-acetylmuramic acid(-L-Ala-D-iGln-L-Lys-D-Ala-D-Ala)-pyrophosphoryl-undecaprenol), using glycyl-tRNA(Gly) as donor, in a ribosome-independent mechanism. Involved in methicillin resistance. This Staphylococcus aureus (strain COL) protein is Lipid II:glycine glycyltransferase (femX).